An 80-amino-acid polypeptide reads, in one-letter code: Acyl carrier protein (80 aa).

In terms of domain architecture, Carrier spans 4 to 79 (EAILEKVRSI…DAVKYIEEKQ (76 aa)). At Ser-39 the chain carries O-(pantetheine 4'-phosphoryl)serine.

The protein belongs to the acyl carrier protein (ACP) family. 4'-phosphopantetheine is transferred from CoA to a specific serine of apo-ACP by AcpS. This modification is essential for activity because fatty acids are bound in thioester linkage to the sulfhydryl of the prosthetic group.

The protein resides in the cytoplasm. It participates in lipid metabolism; fatty acid biosynthesis. Carrier of the growing fatty acid chain in fatty acid biosynthesis. In Prochlorococcus marinus (strain NATL1A), this protein is Acyl carrier protein.